Reading from the N-terminus, the 31-residue chain is Electron transfer flavoprotein-ubiquinone oxidoreductase (31 aa).

11–25 (VVIVGAGGAGLSAAI) contacts FAD.

In terms of assembly, monomer. The cofactor is [4Fe-4S] cluster. It depends on FAD as a cofactor.

It carries out the reaction a ubiquinone + reduced [electron-transfer flavoprotein] = a ubiquinol + oxidized [electron-transfer flavoprotein] + H(+). Its function is as follows. Accepts electrons from ETF and reduces ubiquinone. The sequence is that of Electron transfer flavoprotein-ubiquinone oxidoreductase from Paracoccus denitrificans.